A 198-amino-acid polypeptide reads, in one-letter code: MVESKNTELSQGTWLNKPKSVFQEAGKVTLETDEKTDFWRETFYGFTRDSGHFLGVETGSAFTAQVRVQGSYESLYDQAGIMVRIDDGHWLKAGIEISDGHAMLSSVLTNGKSDWSTAVYGGNARDFWLRVTVEKGVLRIQVSSDKKTWPLVRLAPFPTSDHYLVGPMACTPERGGLKVTFSEWSLTAPLGKALHDLS.

Its subcellular location is the cytoplasm. Functionally, functions in the galactose metabolic pathway via the GAL83 protein and that it may control the level of ENO1. The sequence is that of Regulation of enolase protein 1 (REE1) from Saccharomyces cerevisiae (strain ATCC 204508 / S288c) (Baker's yeast).